Reading from the N-terminus, the 660-residue chain is Bifunctional polymyxin resistance protein ArnA (660 aa).

Positions 1 to 304 (MKAVIFAYHD…TLGLVAGARL (304 aa)) are formyltransferase ArnAFT. H104 functions as the Proton donor; for formyltransferase activity in the catalytic mechanism. Residues R114 and 136–140 (VKRAD) contribute to the (6R)-10-formyltetrahydrofolate site. The dehydrogenase ArnADH stretch occupies residues 314–660 (RRIRVLILGV…RSVDVAERAS (347 aa)). Residues D347 and 368 to 369 (DI) each bind NAD(+). Residues A393, Y398, and 432–433 (TS) contribute to the UDP-alpha-D-glucuronate site. Catalysis depends on E434, which acts as the Proton acceptor; for decarboxylase activity. Residues R460, N492, 526–535 (KLIDGGQQKR), and Y613 contribute to the UDP-alpha-D-glucuronate site. The active-site Proton donor; for decarboxylase activity is R619.

It in the N-terminal section; belongs to the Fmt family. UDP-L-Ara4N formyltransferase subfamily. The protein in the C-terminal section; belongs to the NAD(P)-dependent epimerase/dehydratase family. UDP-glucuronic acid decarboxylase subfamily. Homohexamer, formed by a dimer of trimers.

The catalysed reaction is UDP-alpha-D-glucuronate + NAD(+) = UDP-beta-L-threo-pentopyranos-4-ulose + CO2 + NADH. It carries out the reaction UDP-4-amino-4-deoxy-beta-L-arabinose + (6R)-10-formyltetrahydrofolate = UDP-4-deoxy-4-formamido-beta-L-arabinose + (6S)-5,6,7,8-tetrahydrofolate + H(+). Its pathway is nucleotide-sugar biosynthesis; UDP-4-deoxy-4-formamido-beta-L-arabinose biosynthesis; UDP-4-deoxy-4-formamido-beta-L-arabinose from UDP-alpha-D-glucuronate: step 1/3. It functions in the pathway nucleotide-sugar biosynthesis; UDP-4-deoxy-4-formamido-beta-L-arabinose biosynthesis; UDP-4-deoxy-4-formamido-beta-L-arabinose from UDP-alpha-D-glucuronate: step 3/3. The protein operates within bacterial outer membrane biogenesis; lipopolysaccharide biosynthesis. Bifunctional enzyme that catalyzes the oxidative decarboxylation of UDP-glucuronic acid (UDP-GlcUA) to UDP-4-keto-arabinose (UDP-Ara4O) and the addition of a formyl group to UDP-4-amino-4-deoxy-L-arabinose (UDP-L-Ara4N) to form UDP-L-4-formamido-arabinose (UDP-L-Ara4FN). The modified arabinose is attached to lipid A and is required for resistance to polymyxin and cationic antimicrobial peptides. This is Bifunctional polymyxin resistance protein ArnA from Salmonella newport (strain SL254).